The chain runs to 750 residues: GRIP and coiled-coil domain-containing protein C27D7.02c (750 aa).

Disordered regions lie at residues 14-53 (AQGQ…AKNM) and 188-280 (KTVE…RDIA). Basic and acidic residues-rich tracts occupy residues 18-34 (EEAK…DQLR) and 188-198 (KTVETKNDVPE). Residues 28 to 182 (QEEDQLRRNN…AQSIEQEVIS (155 aa)) are a coiled coil. The span at 201 to 213 (RPSTDTIGVSSAL) shows a compositional bias: polar residues. Residues 213–243 (LSKKKKKRNRKNQKKKSTKQNIEATTENDAL) adopt a coiled-coil conformation. The segment covering 214–230 (SKKKKKRNRKNQKKKST) has biased composition (basic residues). Over residues 233 to 251 (NIEATTENDALSESISTPD) the composition is skewed to polar residues. Basic and acidic residues predominate over residues 269–280 (ADSKEEERRDIA). The stretch at 344–665 (KLVEELTKQL…YEHLQKSFKN (322 aa)) forms a coiled coil. A disordered region spans residues 672 to 703 (KQQPSNHGRNSSVSRSSSSVEVNSKHPGSDDM). Low complexity predominate over residues 676-693 (SNHGRNSSVSRSSSSVEV). Residues 694-703 (NSKHPGSDDM) show a composition bias toward basic and acidic residues. Positions 700 to 748 (SDDMLIDKEYTRNILFQFLEQRDRRPEIVNLLSILLDLSEEQKQKLLSV) constitute a GRIP domain.

The protein localises to the cytoplasm. This Schizosaccharomyces pombe (strain 972 / ATCC 24843) (Fission yeast) protein is GRIP and coiled-coil domain-containing protein C27D7.02c.